The following is a 1217-amino-acid chain: MVTPVCNSSTWQPKDSSFLSWPEMFSLDSFRKDRTQHRQRQCKLPPPRLPPMCVNPAPGGTITRASRDLLKEFPQPKNLLNSVIGRALGISHAKDKLVYVHTNGPKKKKVTLHIKWPKSVEVEGYGSKKIDAERQAAAAACQLFKGWGLLGPRNELFDAAKYRVLADRFGSPADSWWRPEPTMPPTSWRQLNPENIRPGGPAGLSRSLGREEEEDEEEELEEGTIDVTEFLSMTQQDSHNPLRDSRGGSFEMTDDDSAIRALTQFPLPKNLLAKVIQIATSSSTAKNLMQFHTVGTKTKLATLTLLWPCPMTFVAKGRRKAEAENKAAALACKKLKSLGLVDRNNEPLTHAMYNLASLRELGETQRRPCTIQVPEPILRKIEAFLSHYPVDSSWISPELRLQSDDILPLGKDSGPLSDPITGKPYMPLSEAEEVRLSQSLLELWRRRGPIWQEAPQLPVDPHRDTILSAIEQHPVVVISGDTGCGKTTRIPQLLLERYVTEGRGARCNVIITQPRRISAVSVAQRVSHELGPSLRRNVGFQVRLESKPPARGGALLFCTVGILLRKLQSNPSLEGVSHVIVDEVHERDVNTDFLLILLKGLQRLNPALRLVLMSATGDNERFSRYFGGCPVIKVPGFMYPVKEHYLEDILAKLGKHQYPHRHRHHESEDECALDLDLVTDLVLHIDARGEPGGILCFLPGWQEIKGVQQRLQEALGMHESKYLILPVHSNIPMMDQKAIFQQPPLGVRKIVLATNIAETSITVNDIVHVVDSGLHKEERYDLKTKVSCLETVWVSRANVIQRRGRAGRCQSGFAYHLFPRSRLEKMVPFQVPEILRTPLENLVLQAKIHMPEKTAVEFLSKAVDSPNIKAVDEAVILLQEIGVLDQREYLTTLGQRLAHISTDPRLAKAIVLAAIFRCLHPLLVVVSCLTRDPFSSSLQNRAEVDKVKALLSHDSGSDHLAFVRAVAGWEEVLRWQDRTSRENYLEENLLYAPSLRFIHGLIKQFSENIYEAFLVGKPSDCTLPSAQCNEYSEEEELVKGVLMAGLYPNLIQVRQGKVTRQGKFKPNSVTYRTKSGNILLHKSTINREATRLRSRWLTYFMAVKSNGSVFVRDSSQVHPLAVLLLTDGDVHIRDDGRRATISLSDSDLLRLEGDSRTVRLLREFRRALGRMVERSLRSELAALPLSVQQEHGQLLALLAELLRGPCGSFDMRKTADD.

A phosphoserine mark is found at aspartate 15 and serine 29. Residues 76 to 144 form the DRBM domain; that stretch reads PKNLLNSVIG…QAAAAACQLF (69 aa). Residues 176–223 are disordered; sequence WWRPEPTMPPTSWRQLNPENIRPGGPAGLSRSLGREEEEDEEEELEEG. Positions 211 to 223 are enriched in acidic residues; sequence EEEEDEEEELEEG. Residues serine 249 and serine 403 each carry the phosphoserine modification. One can recognise a Helicase ATP-binding domain in the interval 467–635; it reads LSAIEQHPVV…FGGCPVIKVP (169 aa). 480-487 provides a ligand contact to ATP; that stretch reads GDTGCGKT. Residues 582–585 carry the DEAH box motif; the sequence is DEVH. One can recognise a Helicase C-terminal domain in the interval 677 to 850; sequence LVTDLVLHID…NLVLQAKIHM (174 aa).

It belongs to the DEAD box helicase family. DEAH subfamily. As to quaternary structure, identified in a complex with TFAM and SSBP1. Interacts (via N-terminus) with ZC3HAV1 (via N-terminal domain) in an RNA-independent manner. Found in a complex with GRSF1, DDX28, FASTKD2 and FASTKD5. In terms of processing, phosphorylated on Ser-15. As to expression, expressed in the heart, brain, spleen, lung, liver, skeletal muscle, kidney, and testis. Expression is strongest in the testis and brain, while the lowest levels of expression are found in the spleen and lung.

The protein localises to the cytoplasm. It is found in the mitochondrion. It localises to the mitochondrion matrix. The protein resides in the mitochondrion nucleoid. The enzyme catalyses ATP + H2O = ADP + phosphate + H(+). In terms of biological role, RNA-dependent helicase. Plays an important role in the assembly of the mitochondrial large ribosomal subunit. Required for optimal function of the zinc-finger antiviral protein ZC3HAV1. Associates with mitochondrial DNA. Involved in nervous system development and differentiation through its involvement in the up-regulation of a number of genes which are required for neurogenesis, including GSC, NCAM1, neurogenin, and NEUROD. This is ATP-dependent RNA helicase DHX30 (Dhx30) from Mus musculus (Mouse).